A 335-amino-acid polypeptide reads, in one-letter code: Nod factor export ATP-binding protein I (335 aa).

The 231-residue stretch at 37 to 267 (IDVASVTKSY…KIGCQVIEIY (231 aa)) folds into the ABC transporter domain. Residue 69-76 (GPNGAGKS) coordinates ATP.

Belongs to the ABC transporter superfamily. Lipooligosaccharide exporter (TC 3.A.1.102) family. In terms of assembly, the complex is composed of two ATP-binding proteins (NodI) and two transmembrane proteins (NodJ).

The protein localises to the cell inner membrane. In terms of biological role, part of the ABC transporter complex NodIJ involved in the export of the nodulation factors (Nod factors), the bacterial signal molecules that induce symbiosis and subsequent nodulation induction. Nod factors are LCO (lipo-chitin oligosaccharide), a modified beta-1,4-linked N-acetylglucosamine oligosaccharide. This subunit is responsible for energy coupling to the transport system. In Rhizobium meliloti (strain 1021) (Ensifer meliloti), this protein is Nod factor export ATP-binding protein I.